A 265-amino-acid chain; its full sequence is Selenoprotein Pb (265 aa).

Positions 1 to 18 (MQALWPLLLSALPALLGA) are cleaved as a signal peptide. N-linked (GlcNAc...) asparagine glycosylation occurs at N28. A non-standard amino acid (selenocysteine) is located at residue U64. N-linked (GlcNAc...) asparagine glycosylation is found at N88, N178, N184, and N207. Residues 188–265 (SESSDSTKND…SHQEHVHNHR (78 aa)) are disordered. The span at 201 to 211 (ENNQRPNSTEP) shows a compositional bias: polar residues. Residues 215 to 231 (AHHHHHQQHEPHHHHHN) show a composition bias toward basic residues. Residues 239 to 265 (KSGDSDVTGKPKEPPHHSHQEHVHNHR) are compositionally biased toward basic and acidic residues.

Its subcellular location is the secreted. Functionally, might be responsible for some of the extracellular antioxidant defense properties of selenium. In Danio rerio (Zebrafish), this protein is Selenoprotein Pb (sepp1b).